The following is a 265-amino-acid chain: Dehydrin COR47 (265 aa).

Positions 1–14 are enriched in basic and acidic residues; sequence MAEEYKNNVPEHET. The segment at 1 to 265 is disordered; sequence MAEEYKNNVP…EVKKEKESDD (265 aa). Alanine 2 carries the N-acetylalanine modification. Polar residues predominate over residues 16-28; that stretch reads TVATEESPATTTE. A compositionally biased stretch (basic and acidic residues) spans 29–47; the sequence is VTDRGLFDFLGKKEEEVKP. Serine 64 carries the post-translational modification Phosphoserine. Residues 69–79 show a composition bias toward basic and acidic residues; that stretch reads AAEHEEVKENK. At threonine 90 the chain carries Phosphothreonine. 2 stretches are compositionally biased toward basic and acidic residues: residues 96 to 105 and 129 to 156; these read NKPSVIEKLH and IVEG…KTAE. Residues 133 to 153 form repeat 1; sequence EEDKKGLVEKIKEKLPGHHDK. The tract at residues 133–251 is 3 X 21 AA repeats, Lys-rich; the sequence is EEDKKGLVEK…KEKLPGYHAK (119 aa). Low complexity predominate over residues 160-172; the sequence is PVSTTIPVPVSES. Basic and acidic residues-rich tracts occupy residues 173–204 and 227–265; these read VVEH…KAED and PVEH…ESDD. 2 tandem repeats follow at residues 180-200 and 231-251.

Belongs to the plant dehydrin family.

This is Dehydrin COR47 (COR47) from Arabidopsis thaliana (Mouse-ear cress).